The chain runs to 213 residues: Protein-L-isoaspartate O-methyltransferase 1 (213 aa).

The active site involves Ser64.

This sequence belongs to the methyltransferase superfamily. L-isoaspartyl/D-aspartyl protein methyltransferase family.

The protein localises to the cytoplasm. It catalyses the reaction [protein]-L-isoaspartate + S-adenosyl-L-methionine = [protein]-L-isoaspartate alpha-methyl ester + S-adenosyl-L-homocysteine. Functionally, catalyzes the methyl esterification of L-isoaspartyl residues in peptides and proteins that result from spontaneous decomposition of normal L-aspartyl and L-asparaginyl residues. It plays a role in the repair and/or degradation of damaged proteins. The polypeptide is Protein-L-isoaspartate O-methyltransferase 1 (Nitrosococcus oceani (strain ATCC 19707 / BCRC 17464 / JCM 30415 / NCIMB 11848 / C-107)).